Consider the following 655-residue polypeptide: A-type voltage-gated potassium channel KCND3 (655 aa).

The Cytoplasmic portion of the chain corresponds to 1–182; that stretch reads MAAGVAAWLP…FENPHTSTLA (182 aa). Positions 6–21 are interaction with KCNIP1 and KCNIP2; that stretch reads AAWLPFARAAAIGWMP. The segment at 70–78 is interaction with KCNIP1; the sequence is EKEFFFNED. Zn(2+) is bound by residues His-104, Cys-110, Cys-131, and Cys-132. Ser-153 carries the phosphoserine modification. Residues 183–204 traverse the membrane as a helical segment; the sequence is LVFYYVTGFFIAVSVITNVVET. Residues 205 to 223 lie on the Extracellular side of the membrane; sequence VPCGTVPGSKELPCGERYS. The chain crosses the membrane as a helical span at residues 224–246; it reads VAFFCLDTACVMIFTVEYLLRLF. The Cytoplasmic segment spans residues 247 to 253; it reads AAPSRYR. The helical transmembrane segment at 254-277 threads the bilayer; the sequence is FIRSVMSIIDVVAIMPYYIGLVMT. Over 278-283 the chain is Extracellular; the sequence is NNEDVS. The helical; Voltage-sensor transmembrane segment at 284-306 threads the bilayer; that stretch reads GAFVTLRVFRVFRIFKFSRHSQG. Over 307-318 the chain is Cytoplasmic; that stretch reads LRILGYTLKSCA. Residues 319–343 form a helical membrane-spanning segment; sequence SELGFLLFSLTMAIIIFATVMFYAE. Over 344-352 the chain is Extracellular; sequence KGSSASKFT. An intramembrane region (helical) is located at residues 353–366; the sequence is SIPASFWYTIVTMT. K(+) is bound by residues Thr-367, Leu-368, Gly-369, and Tyr-370. A Selectivity filter motif is present at residues 367-372; that stretch reads TLGYGD. An intramembrane segment occupies 367–374; it reads TLGYGDMV. A helical membrane pass occupies residues 378 to 400; sequence IAGKIFGSICSLSGVLVIALPVP. Over 401-655 the chain is Cytoplasmic; it reads VIVSNFSRIY…TSNVVKVSAL (255 aa). Thr-459 is subject to Phosphothreonine. The tract at residues 470–487 is interaction with KCNIP1 and KCNIP2; sequence SLIESQHHHLLHCLEKTT. A mediates dendritic targeting region spans residues 472–487; it reads IESQHHHLLHCLEKTT. Positions 523–565 are disordered; sequence SSMQNYPSTRSPSLSSHSGLTTTCCSRRSKKTTHLPNSNLPAT. Over residues 529-548 the composition is skewed to low complexity; the sequence is PSTRSPSLSSHSGLTTTCCS. 2 positions are modified to phosphoserine: Ser-569 and Ser-585. The disordered stretch occupies residues 615–655; that stretch reads ISIPTPPALTPEGESRPPPASPGPNTNIPSITSNVVKVSAL. A compositionally biased stretch (polar residues) spans 637-655; the sequence is GPNTNIPSITSNVVKVSAL.

The protein belongs to the potassium channel family. D (Shal) (TC 1.A.1.2) subfamily. Kv4.3/KCND3 sub-subfamily. In terms of assembly, homotetramer. Heterotetramer with KCND2. Associates with the regulatory subunit KCNIP3. Associates with the regulatory subunit KCNIP4. Interacts with KCNE1, KCNE2, SCN1B and KCNAB1 and DLG1. Component of heteromultimeric potassium channels. Identified in potassium channel complexes containing KCND1, KCND2, KCND3, KCNIP1, KCNIP2, KCNIP3, KCNIP4, DPP6 and DPP10. Interacts with KCNIP1; each KCNIP1 monomer interacts with two adjacent KCND3 subunits, through both the N-terminal inactivation ball of a KCND3 subunit and a C-terminal helix from the adjacent KCND3 subunit, clamping them together; this interaction stabilizes the tetrameric form and modulates the channel gating kinetics namely channel activation and inactivation kinetics and rate of recovery from inactivation. Interacts with DPP6; this interaction modulates the channel gating kinetics namely channel activation and inactivation kinetics and rate of recovery from inactivation. Interacts with KCNIP2; each KCNIP2 monomer interacts with two adjacent KCND3 subunits, through both the N-terminal inactivation ball of a KCND3 subunit and a C-terminal helix from the adjacent KCND3 subunit, clamping them together; this interaction modulates the channel gating kinetics. Post-translationally, regulated through phosphorylation at Ser-569 by CaMK2D.

The protein resides in the cell membrane. It localises to the sarcolemma. Its subcellular location is the cell projection. The protein localises to the dendrite. The catalysed reaction is K(+)(in) = K(+)(out). In terms of biological role, pore-forming (alpha) subunit of voltage-gated A-type potassium channels that mediates transmembrane potassium transport in excitable membranes, in brain and heart. In cardiomyocytes, may generate the transient outward potassium current I(To). In neurons, may conduct the transient subthreshold somatodendritic A-type potassium current (ISA). Kinetics properties are characterized by fast activation at subthreshold membrane potentials, rapid inactivation, and quick recovery from inactivation. Channel properties are modulated by interactions with regulatory subunits. Interaction with the regulatory subunits KCNIP1 or KCNIP2 modulates the channel gating kinetics namely channel activation and inactivation kinetics and rate of recovery from inactivation. Likewise, interaction with DPP6 modulates the channel gating kinetics namely channel activation and inactivation kinetics. This is A-type voltage-gated potassium channel KCND3 from Mus musculus (Mouse).